Here is a 1542-residue protein sequence, read N- to C-terminus: Pleiotropic ABC efflux transporter of multiple drugs PDH1 (1542 aa).

Residues 1 to 14 (MNTPDDSSVSSVDS) are compositionally biased toward low complexity. Residues 1-61 (MNTPDDSSVS…APADGSAPLD (61 aa)) form a disordered region. Over 1–517 (MNTPDDSSVS…LIRNFWRIKN (517 aa)) the chain is Cytoplasmic. Over residues 24 to 33 (NVEKRIRELA) the composition is skewed to basic and acidic residues. A compositionally biased stretch (polar residues) spans 35–47 (SLTQQSLTSSNRS). An ABC transporter 1 domain is found at 153–409 (VKLLNAVWRK…FQKMGYFCPK (257 aa)). 6 helical membrane passes run 518-540 (SASV…GSMF), 552-574 (FYFR…LLEI), 603-625 (VISE…YFLV), 634-652 (FFFY…SHLF), 662-684 (LQEA…GFAI), and 773-792 (GFGV…LILC). Topologically, residues 793 to 1220 (EFNEGAKQKG…LFQQYWRTPD (428 aa)) are cytoplasmic. Basic and acidic residues predominate over residues 825 to 834 (TKMHTDKNDI). The interval 825 to 846 (TKMHTDKNDIENNSESITSNAT) is disordered. The span at 835-846 (ENNSESITSNAT) shows a compositional bias: polar residues. Residues 885 to 1128 (FHWQNLCYDV…MIKYFEDHGA (244 aa)) form the ABC transporter 2 domain. ATP is bound at residue 921-928 (GASGAGKT). 6 consecutive transmembrane segments (helical) span residues 1221-1241 (YLWS…FTFF), 1256-1276 (SIFM…PTFV), 1296-1316 (AFIL…GTLA), 1342-1362 (LFWL…LFVI), 1370-1390 (TAAH…GVMA), and 1495-1515 (GIFI…YWLA). Over 1516-1542 (RVPKTNGKIAKNGKTAKVNFIRRLIPF) the chain is Cytoplasmic.

It belongs to the ABC transporter superfamily. ABCG family. PDR (TC 3.A.1.205) subfamily. In terms of processing, phosphorylated by PKA. Dephosphorylated on glucose depletion and independently rephosphorylated during glucose exposure or under stress.

The protein resides in the cell membrane. Pleiotropic ABC efflux transporter that confers resistance to structurally and functionally unrelated compounds including caspofungin or azoles such as fluconazole, itraconazole, posaconazole, voriconazole, and isavuconazole. Does not play a role in the azole resistance in mature biofilms. In Candida glabrata (strain ATCC 2001 / BCRC 20586 / JCM 3761 / NBRC 0622 / NRRL Y-65 / CBS 138) (Yeast), this protein is Pleiotropic ABC efflux transporter of multiple drugs PDH1.